Consider the following 160-residue polypeptide: Phosphopantetheine adenylyltransferase (160 aa).

Ser9 is a substrate binding site. ATP is bound by residues 9–10 (SF) and His17. Substrate-binding residues include Lys41, Leu73, and Arg87. ATP-binding positions include 88–90 (GLR), Glu98, and 123–129 (YTFLSSS).

The protein belongs to the bacterial CoaD family. As to quaternary structure, homohexamer. Mg(2+) is required as a cofactor.

It localises to the cytoplasm. It catalyses the reaction (R)-4'-phosphopantetheine + ATP + H(+) = 3'-dephospho-CoA + diphosphate. It participates in cofactor biosynthesis; coenzyme A biosynthesis; CoA from (R)-pantothenate: step 4/5. Reversibly transfers an adenylyl group from ATP to 4'-phosphopantetheine, yielding dephospho-CoA (dPCoA) and pyrophosphate. The chain is Phosphopantetheine adenylyltransferase from Dictyoglomus turgidum (strain DSM 6724 / Z-1310).